The following is a 668-amino-acid chain: Trehalase (668 aa).

Residues 1 to 23 (MVLQQTEPTDGADRKASDGPLTV) are disordered.

It belongs to the glycosyl hydrolase 15 family. In terms of assembly, homomultimer of 20 or more subunits. Requires Mg(2+) as cofactor. The cofactor is phosphate.

The enzyme catalyses alpha,alpha-trehalose + H2O = alpha-D-glucose + beta-D-glucose. It participates in glycan degradation; trehalose degradation; D-glucose from alpha,alpha-trehalose: step 1/1. Its activity is regulated as follows. Inhibited by pyrophosphate and polyphosphates. Also competitively inhibited by validoxylamine and castanospermine, but not by trehazolin. Functionally, catalyzes the hydrolysis of alpha,alpha-trehalose into two molecules of D-glucose. Does not hydrolyze maltose, isomaltose, sucrose, cellobiose, p-nitrophenyl-alpha-D-glucopyranoside, and methyl-alpha-D-glucopyranoside. Is also inactive on alpha,beta-trehalose, beta,beta-trehalose, alpha,alpha-trehalose-6,6'-dibehenate, trehalulose, nigerose, and trehalose dimycolate. In Mycolicibacterium smegmatis (strain ATCC 700084 / mc(2)155) (Mycobacterium smegmatis), this protein is Trehalase.